The primary structure comprises 206 residues: Regulatory protein CysR (206 aa).

Residues 120–196 form the HTH crp-type domain; it reads RRAEAKLASL…DRALIVRYPE (77 aa). Residues 156 to 175 constitute a DNA-binding region (H-T-H motif); the sequence is HQVIAELSGSTRVTTTRLLG.

The protein localises to the cytoplasm. Functionally, probably regulates the expression of genes from the sulfate permease complex. This Synechococcus elongatus (strain ATCC 33912 / PCC 7942 / FACHB-805) (Anacystis nidulans R2) protein is Regulatory protein CysR (cysR).